The chain runs to 141 residues: ATP synthase epsilon chain (141 aa).

This sequence belongs to the ATPase epsilon chain family. F-type ATPases have 2 components, CF(1) - the catalytic core - and CF(0) - the membrane proton channel. CF(1) has five subunits: alpha(3), beta(3), gamma(1), delta(1), epsilon(1). CF(0) has three main subunits: a, b and c.

It is found in the cell inner membrane. Its function is as follows. Produces ATP from ADP in the presence of a proton gradient across the membrane. The sequence is that of ATP synthase epsilon chain from Dechloromonas aromatica (strain RCB).